Reading from the N-terminus, the 229-residue chain is Enolase-phosphatase E1 (229 aa).

Residues 207–229 form a disordered region; that stretch reads RDPASHHPQVQRFDDIHPEQIPA. Residues 218 to 229 show a composition bias toward basic and acidic residues; that stretch reads RFDDIHPEQIPA.

This sequence belongs to the HAD-like hydrolase superfamily. MasA/MtnC family. As to quaternary structure, monomer. The cofactor is Mg(2+).

The enzyme catalyses 5-methylsulfanyl-2,3-dioxopentyl phosphate + H2O = 1,2-dihydroxy-5-(methylsulfanyl)pent-1-en-3-one + phosphate. Its pathway is amino-acid biosynthesis; L-methionine biosynthesis via salvage pathway; L-methionine from S-methyl-5-thio-alpha-D-ribose 1-phosphate: step 3/6. The protein operates within amino-acid biosynthesis; L-methionine biosynthesis via salvage pathway; L-methionine from S-methyl-5-thio-alpha-D-ribose 1-phosphate: step 4/6. Functionally, bifunctional enzyme that catalyzes the enolization of 2,3-diketo-5-methylthiopentyl-1-phosphate (DK-MTP-1-P) into the intermediate 2-hydroxy-3-keto-5-methylthiopentenyl-1-phosphate (HK-MTPenyl-1-P), which is then dephosphorylated to form the acireductone 1,2-dihydroxy-3-keto-5-methylthiopentene (DHK-MTPene). This is Enolase-phosphatase E1 from Klebsiella pneumoniae (strain 342).